We begin with the raw amino-acid sequence, 503 residues long: MTLGSPRRGLLMLLMALVTQGDPVKPSRGPLVTCTCESPHCRGPTCRGAWCTVVLVREEGRHPQEHRGCGNLHRELCRGRPTEFVNHYCCDSHLCNHNVSLVLEATQSPSEQPGTDGQLALILGPVLALLALVALGVLGLWHVRRRQEKQRGLHSELGESSLILKASEQGDSMLGDLLDSDCTTGSGSGLPFLVQRTVARQVALVECVGKGRYGEVWRGLWHGESVAVKIFSSRDEQSWFRETEIYNTVLLRHDNILGFIASDMTSRNSSTQLWLITHYHEHGSLYDFLQRQTLEPHLALRLTVSAACGLAHLHVEIFGTQGKPAIAHRDFKSRNVLVKSNLQCCIADLGLAVMHSQGSDYLDIGNNPRVGTKRYMAPEVLDEQIRTDCFESYKWTDIWAFGLVLWEIARRTIVNGIVEDYRPPFYDVVPNDPSFEDMKKVVCVDQQTPTIPNRLAADPVLSGLAQMMRECWYPNPSARLTALRIKKTLQKISNSPEKPKVIQ.

A signal peptide spans 1–21; the sequence is MTLGSPRRGLLMLLMALVTQG. Over 22–118 the chain is Extracellular; the sequence is DPVKPSRGPL…PSEQPGTDGQ (97 aa). 3 cysteine pairs are disulfide-bonded: Cys34–Cys51, Cys36–Cys41, and Cys46–Cys69. The mediates specificity for BMP ligand stretch occupies residues 73–76; sequence HREL. 2 cysteine pairs are disulfide-bonded: Cys77-Cys89 and Cys90-Cys95. Asn98 carries N-linked (GlcNAc...) asparagine glycosylation. The helical transmembrane segment at 119 to 141 threads the bilayer; it reads LALILGPVLALLALVALGVLGLW. Residues 142–503 lie on the Cytoplasmic side of the membrane; it reads HVRRRQEKQR…NSPEKPKVIQ (362 aa). A phosphoserine mark is found at Ser155, Ser160, and Ser161. The GS domain maps to 172–201; sequence SMLGDLLDSDCTTGSGSGLPFLVQRTVARQ. Positions 202–492 constitute a Protein kinase domain; the sequence is VALVECVGKG…LRIKKTLQKI (291 aa). Residues 208–216 and Lys229 contribute to the ATP site; that span reads VGKGRYGEV. Asp330 functions as the Proton acceptor in the catalytic mechanism.

It belongs to the protein kinase superfamily. TKL Ser/Thr protein kinase family. TGFB receptor subfamily. In terms of assembly, interacts with TSC22D1/TSC-22. The cofactor is Mg(2+). Requires Mn(2+) as cofactor.

The protein resides in the cell membrane. The enzyme catalyses L-threonyl-[receptor-protein] + ATP = O-phospho-L-threonyl-[receptor-protein] + ADP + H(+). It carries out the reaction L-seryl-[receptor-protein] + ATP = O-phospho-L-seryl-[receptor-protein] + ADP + H(+). Functionally, type I receptor for TGF-beta family ligands BMP9/GDF2 and BMP10 and important regulator of normal blood vessel development. On ligand binding, forms a receptor complex consisting of two type II and two type I transmembrane serine/threonine kinases. Type II receptors phosphorylate and activate type I receptors which autophosphorylate, then bind and activate SMAD transcriptional regulators. May bind activin as well. The chain is Activin receptor type-1-like (ACVRL1) from Pongo abelii (Sumatran orangutan).